The sequence spans 260 residues: uncharacterized protein (260 aa).

A signal peptide spans 1–22 (MGNIKSFALYISILLLIVVVAG). C23 is lipidated: N-palmitoyl cysteine. C23 is lipidated: S-diacylglycerol cysteine.

Belongs to the staphylococcal tandem lipoprotein family.

It localises to the cell membrane. This is an uncharacterized protein from Staphylococcus aureus (strain MRSA252).